Reading from the N-terminus, the 207-residue chain is Probable flagellin 2 (207 aa).

Residues 1–14 (MRVGSRKLRRDEKG) constitute a propeptide that is removed on maturation.

This sequence belongs to the archaeal flagellin family.

The protein localises to the archaeal flagellum. Its function is as follows. Flagellin is the subunit protein which polymerizes to form the filaments of archaeal flagella. The chain is Probable flagellin 2 (flaB2) from Archaeoglobus fulgidus (strain ATCC 49558 / DSM 4304 / JCM 9628 / NBRC 100126 / VC-16).